The sequence spans 477 residues: Membrane-bound lytic murein transglycosylase F (477 aa).

The N-terminal stretch at 1 to 22 (MTRFLLIIILGFLLTACQQVTV) is a signal peptide. The segment at 23–257 (DEPEFVPHQL…HLNEKYFGHV (235 aa)) is non-LT domain. The interval 258–477 (KRFDYIDTRA…AGSLSPDQPK (220 aa)) is LT domain. The active site involves E302. The interval 446 to 477 (SKQPMPEDEQNDLIAEELPSMPAGSLSPDQPK) is disordered. Residues 451–460 (PEDEQNDLIA) show a composition bias toward acidic residues.

The protein in the N-terminal section; belongs to the bacterial solute-binding protein 3 family. This sequence in the C-terminal section; belongs to the transglycosylase Slt family.

The protein resides in the cell outer membrane. It catalyses the reaction Exolytic cleavage of the (1-&gt;4)-beta-glycosidic linkage between N-acetylmuramic acid (MurNAc) and N-acetylglucosamine (GlcNAc) residues in peptidoglycan, from either the reducing or the non-reducing ends of the peptidoglycan chains, with concomitant formation of a 1,6-anhydrobond in the MurNAc residue.. Its function is as follows. Murein-degrading enzyme that degrades murein glycan strands and insoluble, high-molecular weight murein sacculi, with the concomitant formation of a 1,6-anhydromuramoyl product. Lytic transglycosylases (LTs) play an integral role in the metabolism of the peptidoglycan (PG) sacculus. Their lytic action creates space within the PG sacculus to allow for its expansion as well as for the insertion of various structures such as secretion systems and flagella. The protein is Membrane-bound lytic murein transglycosylase F of Shewanella sp. (strain W3-18-1).